Here is a 117-residue protein sequence, read N- to C-terminus: Immunoglobulin kappa variable 1-27 (117 aa).

The first 22 residues, 1 to 22 (MDMRVPAQLLGLLLLWLPDTRC), serve as a signal peptide directing secretion. The segment at 23 to 45 (DIQMTQSPSSLSASVGDRVTITC) is framework-1. The Ig-like domain occupies 23–117 (DIQMTQSPSS…YYCQKYNSAP (95 aa)). A disulfide bridge links cysteine 45 with cysteine 110. The interval 46-56 (RASQGISNYLA) is complementarity-determining-1. The segment at 57-71 (WYQQKPGKVPKLLIY) is framework-2. The interval 72 to 78 (AASTLQS) is complementarity-determining-2. Positions 79 to 110 (GVPSRFSGSGSGTDFTLTISSLQPEDVATYYC) are framework-3. The tract at residues 111–117 (QKYNSAP) is complementarity-determining-3.

Immunoglobulins are composed of two identical heavy chains and two identical light chains; disulfide-linked.

It is found in the secreted. It localises to the cell membrane. Functionally, v region of the variable domain of immunoglobulin light chains that participates in the antigen recognition. Immunoglobulins, also known as antibodies, are membrane-bound or secreted glycoproteins produced by B lymphocytes. In the recognition phase of humoral immunity, the membrane-bound immunoglobulins serve as receptors which, upon binding of a specific antigen, trigger the clonal expansion and differentiation of B lymphocytes into immunoglobulins-secreting plasma cells. Secreted immunoglobulins mediate the effector phase of humoral immunity, which results in the elimination of bound antigens. The antigen binding site is formed by the variable domain of one heavy chain, together with that of its associated light chain. Thus, each immunoglobulin has two antigen binding sites with remarkable affinity for a particular antigen. The variable domains are assembled by a process called V-(D)-J rearrangement and can then be subjected to somatic hypermutations which, after exposure to antigen and selection, allow affinity maturation for a particular antigen. The sequence is that of Immunoglobulin kappa variable 1-27 from Homo sapiens (Human).